Here is a 348-residue protein sequence, read N- to C-terminus: D-erythrose-4-phosphate dehydrogenase (348 aa).

Residues 12–13 (RI) and arginine 81 contribute to the NAD(+) site. Substrate is bound by residues 154-156 (SCT), arginine 200, 213-214 (TK), and arginine 236. The active-site Nucleophile is cysteine 155. Asparagine 318 contributes to the NAD(+) binding site.

This sequence belongs to the glyceraldehyde-3-phosphate dehydrogenase family. Epd subfamily. Homotetramer.

It is found in the cytoplasm. The enzyme catalyses D-erythrose 4-phosphate + NAD(+) + H2O = 4-phospho-D-erythronate + NADH + 2 H(+). It participates in cofactor biosynthesis; pyridoxine 5'-phosphate biosynthesis; pyridoxine 5'-phosphate from D-erythrose 4-phosphate: step 1/5. In terms of biological role, catalyzes the NAD-dependent conversion of D-erythrose 4-phosphate to 4-phosphoerythronate. The sequence is that of D-erythrose-4-phosphate dehydrogenase from Salmonella schwarzengrund (strain CVM19633).